A 565-amino-acid chain; its full sequence is Sulfite reductase [NADPH] hemoprotein beta-component (565 aa).

The [4Fe-4S] cluster site is built by C429, C435, C474, and C478. A siroheme-binding site is contributed by C478.

It belongs to the nitrite and sulfite reductase 4Fe-4S domain family. As to quaternary structure, alpha(8)-beta(8). The alpha component is a flavoprotein, the beta component is a hemoprotein. Siroheme is required as a cofactor. [4Fe-4S] cluster serves as cofactor.

The enzyme catalyses hydrogen sulfide + 3 NADP(+) + 3 H2O = sulfite + 3 NADPH + 4 H(+). The protein operates within sulfur metabolism; hydrogen sulfide biosynthesis; hydrogen sulfide from sulfite (NADPH route): step 1/1. Functionally, component of the sulfite reductase complex that catalyzes the 6-electron reduction of sulfite to sulfide. This is one of several activities required for the biosynthesis of L-cysteine from sulfate. In Shewanella piezotolerans (strain WP3 / JCM 13877), this protein is Sulfite reductase [NADPH] hemoprotein beta-component.